A 495-amino-acid chain; its full sequence is Probable cobyric acid synthase (495 aa).

The GATase cobBQ-type domain occupies 256-441; that stretch reads DVDIAVIRLT…LHGLFDNVNI (186 aa). The active-site Nucleophile is Cys-334. The active site involves His-433.

This sequence belongs to the CobB/CobQ family. CobQ subfamily.

It functions in the pathway cofactor biosynthesis; adenosylcobalamin biosynthesis. Functionally, catalyzes amidations at positions B, D, E, and G on adenosylcobyrinic A,C-diamide. NH(2) groups are provided by glutamine, and one molecule of ATP is hydrogenolyzed for each amidation. In Methanococcoides burtonii (strain DSM 6242 / NBRC 107633 / OCM 468 / ACE-M), this protein is Probable cobyric acid synthase.